A 330-amino-acid polypeptide reads, in one-letter code: Ribosomal RNA small subunit methyltransferase H (330 aa).

S-adenosyl-L-methionine-binding positions include 40–42, Asp-58, Phe-85, Asp-101, and Gln-108; that span reads GGY.

The protein belongs to the methyltransferase superfamily. RsmH family.

The protein resides in the cytoplasm. The enzyme catalyses cytidine(1402) in 16S rRNA + S-adenosyl-L-methionine = N(4)-methylcytidine(1402) in 16S rRNA + S-adenosyl-L-homocysteine + H(+). Its function is as follows. Specifically methylates the N4 position of cytidine in position 1402 (C1402) of 16S rRNA. In Roseobacter denitrificans (strain ATCC 33942 / OCh 114) (Erythrobacter sp. (strain OCh 114)), this protein is Ribosomal RNA small subunit methyltransferase H.